Here is a 130-residue protein sequence, read N- to C-terminus: Prefoldin subunit alpha (130 aa).

Belongs to the prefoldin subunit alpha family. As to quaternary structure, heterohexamer of two alpha and four beta subunits.

It localises to the cytoplasm. Molecular chaperone capable of stabilizing a range of proteins. Seems to fulfill an ATP-independent, HSP70-like function in archaeal de novo protein folding. The sequence is that of Prefoldin subunit alpha (pfdA) from Thermoplasma acidophilum (strain ATCC 25905 / DSM 1728 / JCM 9062 / NBRC 15155 / AMRC-C165).